A 392-amino-acid chain; its full sequence is Sulfate adenylyltransferase (392 aa).

This sequence belongs to the sulfate adenylyltransferase family.

It catalyses the reaction sulfate + ATP + H(+) = adenosine 5'-phosphosulfate + diphosphate. The protein operates within sulfur metabolism; hydrogen sulfide biosynthesis; sulfite from sulfate: step 1/3. The chain is Sulfate adenylyltransferase from Nostoc punctiforme (strain ATCC 29133 / PCC 73102).